Consider the following 188-residue polypeptide: Ion-translocating oxidoreductase complex subunit B (188 aa).

The hydrophobic stretch occupies residues 1 to 26; the sequence is MNGVFLAIGALLPICLAGGALLGYAA. Residues 32 to 90 enclose the 4Fe-4S domain; that stretch reads QGDPVAEQVNALLPQTQCGQCGYPGCKPYAEAIAAGDKINKCPPGGEATIRALADLLDL. [4Fe-4S] cluster is bound by residues Cys49, Cys52, Cys57, Cys73, Cys113, Cys116, Cys119, Cys123, Cys143, Cys146, Cys149, and Cys153. 2 4Fe-4S ferredoxin-type domains span residues 104-133 and 134-163; these read RVAY…GAAR and LMHT…MRET.

This sequence belongs to the 4Fe4S bacterial-type ferredoxin family. RnfB subfamily. As to quaternary structure, the complex is composed of six subunits: RnfA, RnfB, RnfC, RnfD, RnfE and RnfG. [4Fe-4S] cluster is required as a cofactor.

The protein localises to the cell inner membrane. Part of a membrane-bound complex that couples electron transfer with translocation of ions across the membrane. This is Ion-translocating oxidoreductase complex subunit B from Pseudomonas aeruginosa (strain UCBPP-PA14).